The chain runs to 430 residues: 3-phosphoshikimate 1-carboxyvinyltransferase (430 aa).

3-phosphoshikimate contacts are provided by K23, S24, and R28. K23 contacts phosphoenolpyruvate. G95 and R123 together coordinate phosphoenolpyruvate. Residues S169, Q171, D315, and K342 each contribute to the 3-phosphoshikimate site. Q171 is a phosphoenolpyruvate binding site. D315 serves as the catalytic Proton acceptor. Positions 346 and 388 each coordinate phosphoenolpyruvate.

This sequence belongs to the EPSP synthase family. As to quaternary structure, monomer.

It localises to the cytoplasm. It catalyses the reaction 3-phosphoshikimate + phosphoenolpyruvate = 5-O-(1-carboxyvinyl)-3-phosphoshikimate + phosphate. The protein operates within metabolic intermediate biosynthesis; chorismate biosynthesis; chorismate from D-erythrose 4-phosphate and phosphoenolpyruvate: step 6/7. Its function is as follows. Catalyzes the transfer of the enolpyruvyl moiety of phosphoenolpyruvate (PEP) to the 5-hydroxyl of shikimate-3-phosphate (S3P) to produce enolpyruvyl shikimate-3-phosphate and inorganic phosphate. The polypeptide is 3-phosphoshikimate 1-carboxyvinyltransferase (Streptococcus pyogenes serotype M1).